The sequence spans 234 residues: Peroxiredoxin (234 aa).

The Thioredoxin domain maps to 6–161 (PLIGEKLPEM…ILRLLKALQV (156 aa)). Catalysis depends on Cys48, which acts as the Cysteine sulfenic acid (-SOH) intermediate. Position 124 (Arg124) interacts with substrate. The cysteines at positions 203 and 209 are disulfide-linked.

It belongs to the peroxiredoxin family. Prx6 subfamily. As to quaternary structure, homodecamer. Pentamer of dimers that assemble into a ring structure.

The protein localises to the cytoplasm. It carries out the reaction a hydroperoxide + [thioredoxin]-dithiol = an alcohol + [thioredoxin]-disulfide + H2O. Its function is as follows. Thiol-specific peroxidase that catalyzes the reduction of hydrogen peroxide and organic hydroperoxides to water and alcohols, respectively. Plays a role in cell protection against oxidative stress by detoxifying peroxides. This is Peroxiredoxin from Ignicoccus hospitalis (strain KIN4/I / DSM 18386 / JCM 14125).